A 123-amino-acid polypeptide reads, in one-letter code: Small ribosomal subunit protein uS12 (123 aa).

At D89 the chain carries 3-methylthioaspartic acid.

This sequence belongs to the universal ribosomal protein uS12 family. As to quaternary structure, part of the 30S ribosomal subunit. Contacts proteins S8 and S17. May interact with IF1 in the 30S initiation complex.

Its function is as follows. With S4 and S5 plays an important role in translational accuracy. In terms of biological role, interacts with and stabilizes bases of the 16S rRNA that are involved in tRNA selection in the A site and with the mRNA backbone. Located at the interface of the 30S and 50S subunits, it traverses the body of the 30S subunit contacting proteins on the other side and probably holding the rRNA structure together. The combined cluster of proteins S8, S12 and S17 appears to hold together the shoulder and platform of the 30S subunit. The chain is Small ribosomal subunit protein uS12 from Syntrophus aciditrophicus (strain SB).